Here is a 619-residue protein sequence, read N- to C-terminus: Chaperone protein HscA homolog (619 aa).

This sequence belongs to the heat shock protein 70 family.

In terms of biological role, chaperone involved in the maturation of iron-sulfur cluster-containing proteins. Has a low intrinsic ATPase activity which is markedly stimulated by HscB. This Pseudomonas aeruginosa (strain LESB58) protein is Chaperone protein HscA homolog.